A 3179-amino-acid polypeptide reads, in one-letter code: Guanylate cyclase beta (3179 aa).

The Cytoplasmic segment spans residues 1–60 (MKTQTLSLMNINGKRKFLGTNNKIYRKVIINPTSEDDIQKFCRNYFRIYNFSLYNFIRRL). The helical transmembrane segment at 61–81 (ISFDAILVYSLFLTVYIFSEI) threads the bilayer. Residues 82–88 (NHGETKK) lie on the Extracellular side of the membrane. A helical transmembrane segment spans residues 89 to 109 (YLFIDTAISLFFNIILLIVIE). Topologically, residues 110-295 (SLFELKKLKD…FCIKMNNIVY (186 aa)) are cytoplasmic. Residues 296–316 (YLIFMYFVFVVLSIVIKTIFF) form a helical membrane-spanning segment. Residues 317–328 (HKKNSFQNSRDS) are Extracellular-facing. Residues 329–349 (FLSMLEDFVGLYILVLPIMMY) form a helical membrane-spanning segment. The Cytoplasmic portion of the chain corresponds to 350–988 (SEKSLIYIIQ…GRLNRFSLCK (639 aa)). The helical transmembrane segment at 989 to 1009 (VFLWIIYLKITVVSFYFFHNF) threads the bilayer. The Extracellular segment spans residues 1010 to 1020 (DNYFSGSSASS). The chain crosses the membrane as a helical span at residues 1021-1041 (ILYTQTTFALLHYFLIIAFSA). At 1042–1069 (YEIDLPYKFVRRLPYIYQLSRRKYFLNN) the chain is on the cytoplasmic side. A helical membrane pass occupies residues 1070 to 1090 (NIILLTIIEAILISLTSYYIL). At 1091 to 1102 (RLNVFHLITHRE) the chain is on the extracellular side. A helical membrane pass occupies residues 1103-1123 (FTFHIFILNVFITTEKILLLS). Residues 1124–1127 (KTWH) are Cytoplasmic-facing. The helical transmembrane segment at 1128-1148 (IYFFIMAVLIIGILLIYVNIF) threads the bilayer. Residues 1149-1168 (TLVDCIKNGKCEFSLFQMEN) lie on the Extracellular side of the membrane. The chain crosses the membrane as a helical span at residues 1169 to 1189 (IYFWTSLFPILYINFIFDKLM). At 1190–1304 (KYIKNRIYPD…YEKGNKLKLR (115 aa)) the chain is on the cytoplasmic side. Residues 1305-1325 (IIVILLFLIYIIIFSSQTIID) form a helical membrane-spanning segment. Topologically, residues 1326–1331 (INTKSN) are extracellular. A helical transmembrane segment spans residues 1332-1352 (IHYITMFYIIYFVLACVLLIY). The Cytoplasmic segment spans residues 1353-1360 (IRIRNKAT). The chain crosses the membrane as a helical span at residues 1361–1381 (STFFFFLSRFLLICGFCIELY). The Extracellular segment spans residues 1382–1401 (DNISNDILNVLITYSFTVSY). The N-linked (GlcNAc...) asparagine glycan is linked to asparagine 1383. Residues 1402 to 1422 (IFFMSFKILEALLVCISILLL) form a helical membrane-spanning segment. Topologically, residues 1423 to 1464 (TFGVYYEKNKNMIDICTHFCSNPYLSINNLDHMNISCLCKKQ) are cytoplasmic. The chain crosses the membrane as a helical span at residues 1465 to 1485 (IVIFLISLLSFTLICLSMKYY). At 1486–1507 (EIFYLKKKFLFRYKQKVNLAKQ) the chain is on the extracellular side. Residues 1508–1528 (IEILHTMLPNFLVEYLLISDP) traverse the membrane as a helical segment. Residues 1529–2739 (KNDGIMVGKN…IINIDLTKKL (1211 aa)) lie on the Cytoplasmic side of the membrane. The region spanning 1548–1700 (SVIFCDIDDF…DTVNTASRMK (153 aa)) is the Guanylate cyclase 1 domain. Disordered stretches follow at residues 2123 to 2153 (LHNY…YTSS), 2355 to 2379 (SINK…KDKK), and 2576 to 2656 (KDSD…HHHS). Positions 2131–2142 (NKNKNKKNNKNV) are enriched in basic residues. Residues 2584-2607 (NNNKISKNRYNNNNNNNNSNYSNI) are compositionally biased toward low complexity. Over residues 2614–2645 (HNNKKNHHHNNNKYHHHNNNKYHHHNNNKYHH) the composition is skewed to basic residues. A helical membrane pass occupies residues 2740–2760 (IIIFIFTEIFLSLCNIIELSF). The Extracellular portion of the chain corresponds to 2761–2770 (YEKKLRYNDS). A glycan (N-linked (GlcNAc...) asparagine) is linked at asparagine 2768. Residues 2771 to 2791 (IVIIWLIRSIYLFIITYIWII) form a helical membrane-spanning segment. At 2792 to 2809 (LKTKLKEYKNNSSKMMWT) the chain is on the cytoplasmic side. Residues 2810-2830 (IFILNIFLCSWGIILIDLSCI) form a helical membrane-spanning segment. Residues 2831-2842 (HYSMLLGNKNER) lie on the Extracellular side of the membrane. The chain crosses the membrane as a helical span at residues 2843 to 2863 (ALFFMKDASELIICIQLIFIK). At 2864 to 2870 (NMLFKHK) the chain is on the cytoplasmic side. A helical transmembrane segment spans residues 2871–2891 (FFFFVFFYIFLIYSFSKLFSI). Residues 2892–2895 (HTCQ) lie on the Extracellular side of the membrane. A helical membrane pass occupies residues 2896 to 2916 (THICCSIILFISINILYFWYS). Topologically, residues 2917–3179 (EYLDRIQFLV…KLRQKKGLRS (263 aa)) are cytoplasmic. Positions 2968–3102 (AFLFADIVGF…LDVLIANKIE (135 aa)) constitute a Guanylate cyclase 2 domain. Aspartate 2973, isoleucine 2974, and aspartate 3017 together coordinate Mg(2+).

It in the N-terminal section; belongs to the cation transport ATPase (P-type) (TC 3.A.3) family. Type IV subfamily. This sequence in the C-terminal section; belongs to the adenylyl cyclase class-4/guanylyl cyclase family. The cofactor is Mg(2+). Mn(2+) serves as cofactor.

Its subcellular location is the membrane. It catalyses the reaction GTP = 3',5'-cyclic GMP + diphosphate. Its activity is regulated as follows. Basal guanylate activity of the recombinant guanylate cyclase domains 1 and 2 is not modulated by an increase in Ca(2+) levels or by the gametogenesis inducer xanthurenic acid. Its function is as follows. Catalyzes the synthesis of the second messenger cGMP from GTP. Regulates cGMP production in gametocytes; however, is dispensable for the initiation of gametogenesis. Does not have adenylate cyclase activity. The chain is Guanylate cyclase beta from Plasmodium falciparum (isolate 3D7).